Consider the following 309-residue polypeptide: 4-hydroxy-3-methylbut-2-enyl diphosphate reductase (309 aa).

Cys12 is a binding site for [4Fe-4S] cluster. 2 residues coordinate (2E)-4-hydroxy-3-methylbut-2-enyl diphosphate: His43 and His77. The dimethylallyl diphosphate site is built by His43 and His77. Isopentenyl diphosphate contacts are provided by His43 and His77. Residue Cys99 participates in [4Fe-4S] cluster binding. Residue His127 coordinates (2E)-4-hydroxy-3-methylbut-2-enyl diphosphate. His127 is a binding site for dimethylallyl diphosphate. Position 127 (His127) interacts with isopentenyl diphosphate. Glu129 serves as the catalytic Proton donor. A (2E)-4-hydroxy-3-methylbut-2-enyl diphosphate-binding site is contributed by Thr167. [4Fe-4S] cluster is bound at residue Cys197. (2E)-4-hydroxy-3-methylbut-2-enyl diphosphate is bound by residues Ser225, Ser226, Asn227, and Ser269. Residues Ser225, Ser226, Asn227, and Ser269 each contribute to the dimethylallyl diphosphate site. Residues Ser225, Ser226, Asn227, and Ser269 each contribute to the isopentenyl diphosphate site.

The protein belongs to the IspH family. It depends on [4Fe-4S] cluster as a cofactor.

It carries out the reaction isopentenyl diphosphate + 2 oxidized [2Fe-2S]-[ferredoxin] + H2O = (2E)-4-hydroxy-3-methylbut-2-enyl diphosphate + 2 reduced [2Fe-2S]-[ferredoxin] + 2 H(+). The enzyme catalyses dimethylallyl diphosphate + 2 oxidized [2Fe-2S]-[ferredoxin] + H2O = (2E)-4-hydroxy-3-methylbut-2-enyl diphosphate + 2 reduced [2Fe-2S]-[ferredoxin] + 2 H(+). Its pathway is isoprenoid biosynthesis; dimethylallyl diphosphate biosynthesis; dimethylallyl diphosphate from (2E)-4-hydroxy-3-methylbutenyl diphosphate: step 1/1. The protein operates within isoprenoid biosynthesis; isopentenyl diphosphate biosynthesis via DXP pathway; isopentenyl diphosphate from 1-deoxy-D-xylulose 5-phosphate: step 6/6. Its function is as follows. Catalyzes the conversion of 1-hydroxy-2-methyl-2-(E)-butenyl 4-diphosphate (HMBPP) into a mixture of isopentenyl diphosphate (IPP) and dimethylallyl diphosphate (DMAPP). Acts in the terminal step of the DOXP/MEP pathway for isoprenoid precursor biosynthesis. The protein is 4-hydroxy-3-methylbut-2-enyl diphosphate reductase of Wolbachia pipientis wMel.